The following is a 111-amino-acid chain: NADH-ubiquinone oxidoreductase chain 4 (111 aa).

A helical membrane pass occupies residues 35–55; the sequence is LITSLFSWLDITVFLTGLSAF.

This sequence belongs to the complex I subunit 4 family.

It localises to the mitochondrion membrane. It carries out the reaction a ubiquinone + NADH + 5 H(+)(in) = a ubiquinol + NAD(+) + 4 H(+)(out). Its function is as follows. Core subunit of the mitochondrial membrane respiratory chain NADH dehydrogenase (Complex I) that is believed to belong to the minimal assembly required for catalysis. Complex I functions in the transfer of electrons from NADH to the respiratory chain. The immediate electron acceptor for the enzyme is believed to be ubiquinone. This Caiman crocodilus (Spectacled caiman) protein is NADH-ubiquinone oxidoreductase chain 4 (MT-ND4).